Reading from the N-terminus, the 95-residue chain is Phosphoribosyl-ATP pyrophosphatase (95 aa).

Belongs to the PRA-PH family.

It is found in the cytoplasm. The enzyme catalyses 1-(5-phospho-beta-D-ribosyl)-ATP + H2O = 1-(5-phospho-beta-D-ribosyl)-5'-AMP + diphosphate + H(+). It functions in the pathway amino-acid biosynthesis; L-histidine biosynthesis; L-histidine from 5-phospho-alpha-D-ribose 1-diphosphate: step 2/9. The chain is Phosphoribosyl-ATP pyrophosphatase from Methanosphaera stadtmanae (strain ATCC 43021 / DSM 3091 / JCM 11832 / MCB-3).